The following is a 150-amino-acid chain: Small ribosomal subunit protein eS19 (150 aa).

The protein belongs to the eukaryotic ribosomal protein eS19 family. Part of the 30S ribosomal subunit.

In terms of biological role, may be involved in maturation of the 30S ribosomal subunit. The protein is Small ribosomal subunit protein eS19 of Thermococcus kodakarensis (strain ATCC BAA-918 / JCM 12380 / KOD1) (Pyrococcus kodakaraensis (strain KOD1)).